We begin with the raw amino-acid sequence, 247 residues long: Probable chemoreceptor glutamine deamidase CheD (247 aa).

Residues 204–247 (KRPAAPQPARPRIELFGGRGTTPGAGSQAAGSPYAANLSRKQEA) form a disordered region.

This sequence belongs to the CheD family.

It carries out the reaction L-glutaminyl-[protein] + H2O = L-glutamyl-[protein] + NH4(+). Its function is as follows. Probably deamidates glutamine residues to glutamate on methyl-accepting chemotaxis receptors (MCPs), playing an important role in chemotaxis. In Burkholderia orbicola (strain MC0-3), this protein is Probable chemoreceptor glutamine deamidase CheD.